The chain runs to 189 residues: Thermostable direct hemolysin 1 (189 aa).

Positions 1-24 are cleaved as a signal peptide; it reads MKHQYFAKKSFLFISMLAAFKTSA. Residues Cys-175 and Cys-185 are joined by a disulfide bond.

The protein belongs to the TDH hemolysin family. Homodimer.

Its function is as follows. Bacterial hemolysins are exotoxins that attack blood cell membranes and cause cell rupture by mechanisms not clearly defined. The polypeptide is Thermostable direct hemolysin 1 (tdh1) (Vibrio parahaemolyticus serotype O3:K6 (strain RIMD 2210633)).